A 196-amino-acid chain; its full sequence is Nucleoid occlusion factor SlmA (196 aa).

One can recognise an HTH tetR-type domain in the interval 7–68 (SNRREEILQA…GLIEFIEEAL (62 aa)). Residues 31-50 (TTVKLAKQVGVSEAALYRHF) constitute a DNA-binding region (H-T-H motif). The stretch at 65–142 (EEALMSRINR…QLRQILRERK (78 aa)) forms a coiled coil.

This sequence belongs to the nucleoid occlusion factor SlmA family. Homodimer. Interacts with FtsZ.

The protein resides in the cytoplasm. It localises to the nucleoid. Functionally, required for nucleoid occlusion (NO) phenomenon, which prevents Z-ring formation and cell division over the nucleoid. Acts as a DNA-associated cell division inhibitor that binds simultaneously chromosomal DNA and FtsZ, and disrupts the assembly of FtsZ polymers. SlmA-DNA-binding sequences (SBS) are dispersed on non-Ter regions of the chromosome, preventing FtsZ polymerization at these regions. The chain is Nucleoid occlusion factor SlmA from Vibrio atlanticus (strain LGP32) (Vibrio splendidus (strain Mel32)).